The primary structure comprises 912 residues: Glutamate receptor 3.2 (912 aa).

A signal peptide spans 1-22; it reads MFWVLVLLSFIVLIGDGMISEG. At 23 to 587 the chain is on the extracellular side; it reads AGLRPRYVDV…TPWAFLRPFT (565 aa). N-linked (GlcNAc...) asparagine glycosylation is found at N306, N338, N378, N417, N435, N445, and N532. Residues 544–546 and R551 contribute to the glycine site; that span reads DIA. Residues 544 to 546 and R551 each bind L-methionine; that span reads DIA. Residues 588 to 608 traverse the membrane as a helical segment; that stretch reads PPMWAVTAAFFLIVGSVIWIL. Over 609–617 the chain is Cytoplasmic; it reads EHRINDEFR. Residues 618-638 form a helical membrane-spanning segment; sequence GPPRKQIVTILWFSFSTMFFS. Topologically, residues 639–649 are cytoplasmic; sequence HRENTVSTLGR. A helical transmembrane segment spans residues 650-670; the sequence is AVLLIWLFVVLIITSSYTASL. The Extracellular portion of the chain corresponds to 671 to 828; it reads TSILTVQQLN…EDSEQLKLRS (158 aa). Position 703 (Y703) interacts with glycine. An L-methionine-binding site is contributed by Y703. N-linked (GlcNAc...) asparagine glycosylation is present at N734. 743–746 contributes to the glycine binding site; that stretch reads ERPY. Residue 743-746 coordinates L-methionine; it reads ERPY. An intrachain disulfide couples C755 to C809. 2 N-linked (GlcNAc...) asparagine glycosylation sites follow: N808 and N813. Residues 829–849 form a helical membrane-spanning segment; it reads FWGLFLVCGISCFIALFIYFF. Residues 850–912 are Cytoplasmic-facing; the sequence is KIVRDFFRHG…DLSLKPSRPI (63 aa). Residues 888-912 are disordered; the sequence is KEDESKRRMKRKRNDDLSLKPSRPI.

This sequence belongs to the glutamate-gated ion channel (TC 1.A.10.1) family. In terms of assembly, forms a heteromeric channel with GLR3.4. As to expression, expressed in leaves and siliques, and at lower level in flowers and roots. Detected in the vascular tissues of both shoots and roots. Expressed in root phloem.

It is found in the cell membrane. In terms of biological role, glutamate-gated receptor that probably acts as a non-selective cation channel. May be involved in light-signal transduction and calcium homeostasis via the regulation of calcium influx into cells. Could play a role in calcium unloading from the xylem vessels. Acts as a negative regulator of lateral root initiation and development. May restrict primordia numbers and position along the root axis by a signaling process originating in the phloem. This Arabidopsis thaliana (Mouse-ear cress) protein is Glutamate receptor 3.2.